Reading from the N-terminus, the 343-residue chain is GTPase Obg (343 aa).

The region spanning 1-159 is the Obg domain; sequence MKYIDEVKIQ…FELKLELRVL (159 aa). The OBG-type G domain maps to 160–334; the sequence is ADVGLLGLPN…LTYAIMGYLE (175 aa). GTP-binding positions include 166-173, 191-195, 213-216, 284-287, and 315-317; these read GLPNAGKS, FTTLY, DIPG, NKVD, and SAL. Residues Ser-173 and Thr-193 each contribute to the Mg(2+) site.

Belongs to the TRAFAC class OBG-HflX-like GTPase superfamily. OBG GTPase family. In terms of assembly, monomer. Mg(2+) serves as cofactor.

The protein localises to the cytoplasm. In terms of biological role, an essential GTPase which binds GTP, GDP and possibly (p)ppGpp with moderate affinity, with high nucleotide exchange rates and a fairly low GTP hydrolysis rate. Plays a role in control of the cell cycle, stress response, ribosome biogenesis and in those bacteria that undergo differentiation, in morphogenesis control. In Nitrosomonas eutropha (strain DSM 101675 / C91 / Nm57), this protein is GTPase Obg.